Here is a 399-residue protein sequence, read N- to C-terminus: Adenylate cyclase (399 aa).

Positions 1 to 10 are enriched in polar residues; the sequence is MTVGDTTSGS. The disordered stretch occupies residues 1–35; the sequence is MTVGDTTSGSGEEPAADSSVHATPHHEVDHTVEPT. Residues 24–33 are compositionally biased toward basic and acidic residues; the sequence is PHHEVDHTVE. The 110-residue stretch at 198-307 folds into the Guanylate cyclase domain; the sequence is RVRFADLVGF…TTVNLASRLT (110 aa). 2 residues coordinate Mg(2+): D203 and D247.

The protein belongs to the adenylyl cyclase class-3 family. The cofactor is Mg(2+).

The catalysed reaction is ATP = 3',5'-cyclic AMP + diphosphate. The chain is Adenylate cyclase (cya) from Streptomyces griseus.